A 309-amino-acid polypeptide reads, in one-letter code: Ribose-phosphate pyrophosphokinase (309 aa).

ATP is bound by residues 37–39 (DGE) and 96–97 (RQ). Mg(2+)-binding residues include His-130 and Asp-169. The active site involves Lys-192. D-ribose 5-phosphate contacts are provided by residues Arg-194, Asp-218, and 222 to 226 (DTAGT).

This sequence belongs to the ribose-phosphate pyrophosphokinase family. Class I subfamily. As to quaternary structure, homohexamer. The cofactor is Mg(2+).

It is found in the cytoplasm. The enzyme catalyses D-ribose 5-phosphate + ATP = 5-phospho-alpha-D-ribose 1-diphosphate + AMP + H(+). It functions in the pathway metabolic intermediate biosynthesis; 5-phospho-alpha-D-ribose 1-diphosphate biosynthesis; 5-phospho-alpha-D-ribose 1-diphosphate from D-ribose 5-phosphate (route I): step 1/1. Its function is as follows. Involved in the biosynthesis of the central metabolite phospho-alpha-D-ribosyl-1-pyrophosphate (PRPP) via the transfer of pyrophosphoryl group from ATP to 1-hydroxyl of ribose-5-phosphate (Rib-5-P). The protein is Ribose-phosphate pyrophosphokinase of Wolinella succinogenes (strain ATCC 29543 / DSM 1740 / CCUG 13145 / JCM 31913 / LMG 7466 / NCTC 11488 / FDC 602W) (Vibrio succinogenes).